A 464-amino-acid chain; its full sequence is MDKIVTRFAPSPTGYLHIGGLRTALFNYLYARANGGKFLLRIEDTDLARNSMEATKAIIESFEWAGLDYDGEVVYQSQRFDLYKTYIQQLLESKKAYYCYMSKEELDALRKEQEKNKQTPRYDNRYRDFTGIPPQGIQPVVRIKAPLEGNIEFEDGIKGQISINAKEIDDFIIARSDGTPTYNFVVAVDDALMGITDVIRGDDHLSNTPKQIIIYNALGFALPRFFHVPMILNSQGKKLSKRDGAMGVMDYAKMGYLPEAILNFLVRLGWSYGDKEIFSLEEMLELFNPNELNSSPSAYNEDKLLWLNQHYIKYMDNTLLEQLLGHFGVTKLSESKREILYPALKDRSNTLVSFAQGFNEVMNAPCSYDEKMRIKLDANATQWLNELCKNLNMASWEDNPNIIESYLHQFALEHQIKIGKLMPTLRCALLGKSGGIGVCEALAVLGIEESMRRIYTFIGYQNNI.

Residues 10 to 20 (PSPTGYLHIGG) carry the 'HIGH' region motif. The 'KMSKS' region motif lies at 238 to 242 (KLSKR). Lys-241 is an ATP binding site.

Belongs to the class-I aminoacyl-tRNA synthetase family. Glutamate--tRNA ligase type 1 subfamily. Monomer.

The protein resides in the cytoplasm. It carries out the reaction tRNA(Glu) + L-glutamate + ATP = L-glutamyl-tRNA(Glu) + AMP + diphosphate. Catalyzes the attachment of glutamate to tRNA(Glu) in a two-step reaction: glutamate is first activated by ATP to form Glu-AMP and then transferred to the acceptor end of tRNA(Glu). The sequence is that of Glutamate--tRNA ligase 1 from Helicobacter hepaticus (strain ATCC 51449 / 3B1).